The primary structure comprises 218 residues: Very-long-chain (3R)-3-hydroxyacyl-CoA dehydratase (218 aa).

The Cytoplasmic portion of the chain corresponds to 1–6 (MKTYLS). The chain crosses the membrane as a helical span at residues 7–29 (IYYLIQFCGHSWIFTNMTTRFLF). The Lumenal segment spans residues 30-38 (FGQDAFADT). A helical membrane pass occupies residues 39 to 61 (FYSIGLVMQGCQLLSILELAHIL). At 62–67 (LGVEQN) the chain is on the cytoplasmic side. A helical membrane pass occupies residues 68–87 (GFLPMFLQVAERFIILFVVI). Topologically, residues 88–96 (TSQEEVQSK) are lumenal. A helical membrane pass occupies residues 97–116 (YIVCALFFIWNLWDVIRYPY). Topologically, residues 117-136 (DMLAAVDTDYSALTWLRHTW) are cytoplasmic. A helical membrane pass occupies residues 137–159 (WIVAYPLSVLAEAYTIYESLPYF). Residues Tyr-141 and Glu-148 contribute to the active site. Topologically, residues 160-178 (ESLGTYSFKMALPVSLSFH) are lumenal. A helical transmembrane segment spans residues 179-201 (FPYILTLYLVLQPVGMLYICSCL). The Cytoplasmic portion of the chain corresponds to 202-218 (WSERKQYFQRKLKLKKN).

This sequence belongs to the very long-chain fatty acids dehydratase HACD family.

It localises to the endoplasmic reticulum membrane. The enzyme catalyses a very-long-chain (3R)-3-hydroxyacyl-CoA = a very-long-chain (2E)-enoyl-CoA + H2O. It carries out the reaction (3R)-hydroxyhexadecanoyl-CoA = (2E)-hexadecenoyl-CoA + H2O. The protein operates within lipid metabolism; fatty acid biosynthesis. In terms of biological role, catalyzes the third of the four reactions of the long-chain fatty acids elongation cycle. This endoplasmic reticulum-bound enzymatic process, allows the addition of two carbons to the chain of long- and very long-chain fatty acids/VLCFAs per cycle. This enzyme catalyzes the dehydration of the 3-hydroxyacyl-CoA intermediate into trans-2,3-enoyl-CoA, within each cycle of fatty acid elongation. Thereby, it participates in the production of VLCFAs of different chain lengths that are involved in multiple biological processes as precursors of membrane lipids and lipid mediators. The protein is Very-long-chain (3R)-3-hydroxyacyl-CoA dehydratase of Xenopus laevis (African clawed frog).